Consider the following 158-residue polypeptide: Transcriptional regulator MraZ (158 aa).

2 SpoVT-AbrB domains span residues 5–50 (IYET…GGVY) and 91–134 (AVEC…SQSE).

It belongs to the MraZ family. As to quaternary structure, forms oligomers.

It localises to the cytoplasm. Its subcellular location is the nucleoid. This Geobacter metallireducens (strain ATCC 53774 / DSM 7210 / GS-15) protein is Transcriptional regulator MraZ.